We begin with the raw amino-acid sequence, 348 residues long: Ileal sodium/bile acid cotransporter (348 aa).

Over Met-1–Ala-28 the chain is Extracellular. 2 N-linked (GlcNAc...) asparagine glycosylation sites follow: Asn-3 and Asn-10. Residues Ile-29–Met-49 traverse the membrane as a helical segment. The Cytoplasmic segment spans residues Gly-50–Ser-87. A helical membrane pass occupies residues Val-88–Gly-108. At Gly-109–Ser-126 the chain is on the extracellular side. Residues Val-127–Val-147 traverse the membrane as a helical segment. Residues Tyr-148–Thr-157 are Cytoplasmic-facing. The chain crosses the membrane as a helical span at residues Ile-158–Phe-178. The Extracellular segment spans residues Gly-179–Lys-195. Residues Ile-196–Tyr-216 form a helical membrane-spanning segment. Residues Gln-217 to Pro-224 are Cytoplasmic-facing. Residues Lys-225 to Ala-245 traverse the membrane as a helical segment. Residues Arg-246–Asn-284 lie on the Extracellular side of the membrane. A helical membrane pass occupies residues Leu-285–Leu-305. Topologically, residues Gly-306–Lys-348 are cytoplasmic. Residues Asn-328 to Lys-348 form a disordered region. Ser-335 is subject to Phosphoserine.

It belongs to the bile acid:sodium symporter (BASS) (TC 2.A.28) family. Monomer and homodimer. Expressed in ileum.

It localises to the membrane. It catalyses the reaction taurocholate(out) + 2 Na(+)(out) = taurocholate(in) + 2 Na(+)(in). It carries out the reaction cholate(out) + 2 Na(+)(out) = cholate(in) + 2 Na(+)(in). The catalysed reaction is taurochenodeoxycholate(out) + 2 Na(+)(out) = taurochenodeoxycholate(in) + 2 Na(+)(in). The enzyme catalyses tauroursodeoxycholate(out) + 2 Na(+)(out) = tauroursodeoxycholate(in) + 2 Na(+)(in). It catalyses the reaction glycocholate(out) + 2 Na(+)(out) = glycocholate(in) + 2 Na(+)(in). It carries out the reaction tauronorcholate(out) + 2 Na(+)(out) = tauronorcholate(in) + 2 Na(+)(in). The catalysed reaction is tauroallocholate(out) + 2 Na(+)(out) = tauroallocholate(in) + 2 Na(+)(in). The enzyme catalyses taurodeoxycholate(out) + 2 Na(+)(out) = taurodeoxycholate(in) + 2 Na(+)(in). It catalyses the reaction tauro-beta-muricholate(out) + 2 Na(+)(out) = tauro-beta-muricholate(in) + 2 Na(+)(in). Functionally, plays a critical role in the sodium-dependent reabsorption of bile acids from the lumen of the small intestine. Transports various bile acids, unconjugated or conjugated, such as cholate and taurocholate. Also responsible for bile acid transport in the renal proximal tubules, a salvage mechanism that helps conserve bile acids. Works collaboratively with the Na(+)-taurocholate cotransporting polypeptide (NTCP), the organic solute transporter (OST), and the bile salt export pump (BSEP), to ensure efficacious biological recycling of bile acids during enterohepatic circulation. This is Ileal sodium/bile acid cotransporter (Slc10a2) from Mus musculus (Mouse).